Consider the following 317-residue polypeptide: Acetyl-coenzyme A carboxylase carboxyl transferase subunit alpha (317 aa).

Residues 33–294 (NLDDEIARLQ…KQRLLEDLAD (262 aa)) enclose the CoA carboxyltransferase C-terminal domain.

It belongs to the AccA family. In terms of assembly, acetyl-CoA carboxylase is a heterohexamer composed of biotin carboxyl carrier protein (AccB), biotin carboxylase (AccC) and two subunits each of ACCase subunit alpha (AccA) and ACCase subunit beta (AccD).

The protein localises to the cytoplasm. It carries out the reaction N(6)-carboxybiotinyl-L-lysyl-[protein] + acetyl-CoA = N(6)-biotinyl-L-lysyl-[protein] + malonyl-CoA. It functions in the pathway lipid metabolism; malonyl-CoA biosynthesis; malonyl-CoA from acetyl-CoA: step 1/1. Its function is as follows. Component of the acetyl coenzyme A carboxylase (ACC) complex. First, biotin carboxylase catalyzes the carboxylation of biotin on its carrier protein (BCCP) and then the CO(2) group is transferred by the carboxyltransferase to acetyl-CoA to form malonyl-CoA. This chain is Acetyl-coenzyme A carboxylase carboxyl transferase subunit alpha, found in Glaesserella parasuis serovar 5 (strain SH0165) (Haemophilus parasuis).